Here is a 442-residue protein sequence, read N- to C-terminus: tRNA modification GTPase MnmE (442 aa).

(6S)-5-formyl-5,6,7,8-tetrahydrofolate is bound by residues Arg24, Glu82, and Lys120. Positions Gly217 to Glu367 constitute a TrmE-type G domain. GTP is bound by residues Asn227–Thr232, Ser246–Thr252, and Asp271–Gly274. The Mg(2+) site is built by Ser231 and Thr252. Residue Lys442 participates in (6S)-5-formyl-5,6,7,8-tetrahydrofolate binding.

Belongs to the TRAFAC class TrmE-Era-EngA-EngB-Septin-like GTPase superfamily. TrmE GTPase family. In terms of assembly, homodimer. Heterotetramer of two MnmE and two MnmG subunits. It depends on K(+) as a cofactor.

The protein resides in the cytoplasm. Exhibits a very high intrinsic GTPase hydrolysis rate. Involved in the addition of a carboxymethylaminomethyl (cmnm) group at the wobble position (U34) of certain tRNAs, forming tRNA-cmnm(5)s(2)U34. In Wolbachia sp. subsp. Brugia malayi (strain TRS), this protein is tRNA modification GTPase MnmE.